Consider the following 597-residue polypeptide: Translation initiation factor IF-2 (597 aa).

Low complexity-rich tracts occupy residues 57 to 73 and 81 to 95; these read GGDA…AATA and TPAA…PASD. Residues 57–96 are disordered; that stretch reads GGDAAPAAASAPAAATAEPEEADETPAAAAQADAEPASDL. The tr-type G domain occupies 98–271; the sequence is HRAPVVTIMG…ELEDLRADPK (174 aa). A G1 region spans residues 107 to 114; sequence GHVDHGKT. 107-114 contacts GTP; that stretch reads GHVDHGKT. Residues 132–136 form a G2 region; sequence GITQH. The interval 153–156 is G3; the sequence is DTPG. GTP contacts are provided by residues 153 to 157 and 207 to 210; these read DTPGH and NKVD. The G4 stretch occupies residues 207-210; that stretch reads NKVD. A G5 region spans residues 243–245; it reads SAK.

Belongs to the TRAFAC class translation factor GTPase superfamily. Classic translation factor GTPase family. IF-2 subfamily.

The protein localises to the cytoplasm. One of the essential components for the initiation of protein synthesis. Protects formylmethionyl-tRNA from spontaneous hydrolysis and promotes its binding to the 30S ribosomal subunits. Also involved in the hydrolysis of GTP during the formation of the 70S ribosomal complex. The sequence is that of Translation initiation factor IF-2 from Deinococcus radiodurans (strain ATCC 13939 / DSM 20539 / JCM 16871 / CCUG 27074 / LMG 4051 / NBRC 15346 / NCIMB 9279 / VKM B-1422 / R1).